Here is a 377-residue protein sequence, read N- to C-terminus: Queuine tRNA-ribosyltransferase (377 aa).

The active-site Proton acceptor is the Asp-94. Substrate contacts are provided by residues 94 to 98, Asp-148, Gln-191, and Gly-218; that span reads DSGGF. The interval 249 to 255 is RNA binding; it reads GVGTPDD. Asp-268 functions as the Nucleophile in the catalytic mechanism. An RNA binding; important for wobble base 34 recognition region spans residues 273–277; it reads TRAGR.

It belongs to the queuine tRNA-ribosyltransferase family. As to quaternary structure, homodimer. Within each dimer, one monomer is responsible for RNA recognition and catalysis, while the other monomer binds to the replacement base PreQ1.

It carries out the reaction 7-aminomethyl-7-carbaguanine + guanosine(34) in tRNA = 7-aminomethyl-7-carbaguanosine(34) in tRNA + guanine. The protein operates within tRNA modification; tRNA-queuosine biosynthesis. Its function is as follows. Catalyzes the base-exchange of a guanine (G) residue with the queuine precursor 7-aminomethyl-7-deazaguanine (PreQ1) at position 34 (anticodon wobble position) in tRNAs with GU(N) anticodons (tRNA-Asp, -Asn, -His and -Tyr). Catalysis occurs through a double-displacement mechanism. The nucleophile active site attacks the C1' of nucleotide 34 to detach the guanine base from the RNA, forming a covalent enzyme-RNA intermediate. The proton acceptor active site deprotonates the incoming PreQ1, allowing a nucleophilic attack on the C1' of the ribose to form the product. After dissociation, two additional enzymatic reactions on the tRNA convert PreQ1 to queuine (Q), resulting in the hypermodified nucleoside queuosine (7-(((4,5-cis-dihydroxy-2-cyclopenten-1-yl)amino)methyl)-7-deazaguanosine). In Brucella suis biovar 1 (strain 1330), this protein is Queuine tRNA-ribosyltransferase.